A 643-amino-acid polypeptide reads, in one-letter code: Asparagine synthetase domain-containing protein 1 (643 aa).

The active-site For GATase activity is the cysteine 2. One can recognise a Glutamine amidotransferase type-2 domain in the interval 2–184 (CGICCSVNFS…ASGLFRIDLK (183 aa)). The Asparagine synthetase domain maps to 285–601 (QFIDVLSVAV…GLTASALLPK (317 aa)).

The chain is Asparagine synthetase domain-containing protein 1 (ASNSD1) from Homo sapiens (Human).